The sequence spans 68 residues: MAGQLKSKIVAVAVAAVVVVASSLVGTASAADAPAPAPTSGATATAAAAPAFAAVSVAAAALGGYLFC.

A signal peptide spans 1–30 (MAGQLKSKIVAVAVAAVVVVASSLVGTASA). The GPI-anchor amidated serine moiety is linked to residue Ser-40. Residues 41–68 (GATATAAAAPAFAAVSVAAAALGGYLFC) constitute a propeptide, removed in mature form.

The protein belongs to the AG-peptide AGP family. O-glycosylated on hydroxyprolines; noncontiguous hydroxylproline residues are glycosylated with arabinogalactan. Expressed in roots, stems, flowers and seeds.

Its subcellular location is the vacuole. The protein resides in the aleurone grain membrane. Its function is as follows. Proteoglycan that seems to be implicated in diverse developmental roles such as differentiation, cell-cell recognition, embryogenesis and programmed cell death. The polypeptide is Arabinogalactan peptide 1 (AGPEP1) (Oryza sativa subsp. japonica (Rice)).